The sequence spans 2221 residues: Voltage-dependent L-type calcium channel subunit alpha-1C (2221 aa).

Positions 1 to 20 (MVNENTRMYIPEENHQGSNY) are disordered. Residues 1–124 (MVNENTRMYI…RACISIVEWK (124 aa)) are Cytoplasmic-facing. Residues 47 to 68 (GAALSWQAAIDAARQAKLMGSA) form a calmodulin-binding region. A disordered region spans residues 73–98 (ISTVSSTQRKRQQYGKPKKQGSTTAT). Over residues 80 to 91 (QRKRQQYGKPKK) the composition is skewed to basic residues. Residues 111–408 (NPIRRACISI…LVLGVLSGEF (298 aa)) form an I repeat. Residues 125 to 143 (PFEIIILLTIFANCVALAI) form a helical membrane-spanning segment. The Extracellular segment spans residues 144 to 158 (YIPFPEDDSNATNSN). Asn153 is a glycosylation site (N-linked (GlcNAc...) asparagine). Residues 159 to 179 (LERVEYLFLIIFTVEAFLKVI) form a helical membrane-spanning segment. The Cytoplasmic segment spans residues 180–188 (AYGLLFHPN). A helical membrane pass occupies residues 189 to 209 (AYLRNGWNLLDFIIVVVGLFS). Residues 210–232 (AILEQATKADGANALGGKGAGFD) are Extracellular-facing. A helical membrane pass occupies residues 233–251 (VKALRAFRVLRPLRLVSGV). The Cytoplasmic portion of the chain corresponds to 252-268 (PSLQVVLNSIIKAMVPL). A helical transmembrane segment spans residues 269–290 (LHIALLVLFVIIIYAIIGLELF). Over 291 to 350 (MGKMHKTCYNQEGIADVPAEDDPSPCALETGHGRQCQNGTVCKPGWDGPKHGITNFDNFA) the chain is Extracellular. 2 disulfides stabilise this stretch: Cys298–Cys326 and Cys316–Cys332. Asn328 is a glycosylation site (N-linked (GlcNAc...) asparagine). The segment at residues 351-372 (FAMLTVFQCITMEGWTDVLYWV) is an intramembrane region (pore-forming). The Selectivity filter of repeat I signature appears at 361-364 (TMEG). Glu363 contributes to the Ca(2+) binding site. Residues 373–380 (NDAVGRDW) lie on the Extracellular side of the membrane. The helical transmembrane segment at 381-401 (PWIYFVTLIIIGSFFVLNLVL) threads the bilayer. Over 402–524 (GVLSGEFSKE…RKCRAAVKSN (123 aa)) the chain is Cytoplasmic. The AID/alpha-interaction domain; mediates interaction with the beta subunit stretch occupies residues 428–445 (QQLEEDLKGYLDWITQAE). A disordered region spans residues 449–481 (PENEDEGMDEEKPRNMSMPTSETESVNTENVAG). Residues 465 to 478 (SMPTSETESVNTEN) are compositionally biased toward polar residues. Ser469 carries the post-translational modification Phosphoserine. Thr476 is modified (phosphothreonine). Residues 510-756 (NRFCRRKCRA…VFLAIAVDNL (247 aa)) form an II repeat. Residues 525 to 543 (VFYWLVIFLVFLNTLTIAS) traverse the membrane as a helical segment. Over 544-554 (EHYNQPNWLTE) the chain is Extracellular. Residues 555–575 (VQDTANKALLALFTAEMLLKM) traverse the membrane as a helical segment. Topologically, residues 576-586 (YSLGLQAYFVS) are cytoplasmic. Residues 587-606 (LFNRFDCFVVCGGILETILV) traverse the membrane as a helical segment. Residues 607–615 (ETKIMSPLG) lie on the Extracellular side of the membrane. Residues 616–634 (ISVLRCVRLLRIFKITRYW) traverse the membrane as a helical segment. Residues 635 to 653 (NSLSNLVASLLNSVRSIAS) are Cytoplasmic-facing. The helical transmembrane segment at 654–673 (LLLLLFLFIIIFSLLGMQLF) threads the bilayer. Over 674 to 693 (GGKFNFDEMQTRRSTFDNFP) the chain is Extracellular. Positions 694–715 (QSLLTVFQILTGEDWNSVMYDG) form an intramembrane region, pore-forming. The Selectivity filter of repeat II signature appears at 704-707 (TGED). Glu706 lines the Ca(2+) pocket. The Extracellular portion of the chain corresponds to 716 to 725 (IMAYGGPSFP). A helical transmembrane segment spans residues 726–745 (GMLVCIYFIILFICGNYILL). The Cytoplasmic segment spans residues 746 to 900 (NVFLAIAVDN…LQCHRIVNDT (155 aa)). The tract at residues 764 to 861 (SAQKEEEEEK…EMPVGPRPRP (98 aa)) is disordered. Over residues 783 to 792 (SPEKKQELVE) the composition is skewed to basic and acidic residues. Phosphoserine occurs at positions 808 and 815. The interval 829–876 (NENEDKSPYPNPETTGEEDEEEPEMPVGPRPRPLSELHLKEKAVPMPE) is interaction with STAC2. The span at 843 to 852 (TGEEDEEEPE) shows a compositional bias: acidic residues. The III repeat unit spans residues 887 to 1189 (NRFRLQCHRI…IFVGFVIVTF (303 aa)). The helical transmembrane segment at 901 to 919 (IFTNLILFFILLSSISLAA) threads the bilayer. Residues 920 to 931 (EDPVQHTSFRNH) lie on the Extracellular side of the membrane. The helical transmembrane segment at 932–952 (ILFYFDIVFTTIFTIEIALKI) threads the bilayer. The Cytoplasmic segment spans residues 953-987 (LGNADYVFTSIFTLEIILKMTAYGAFLHKGSFCRN). A helical membrane pass occupies residues 988–1006 (YFNILDLLVVSVSLISFGI). Residues 1007–1013 (QSSAINV) lie on the Extracellular side of the membrane. A helical transmembrane segment spans residues 1014–1032 (VKILRVLRVLRPLRAINRA). Residues 1033 to 1051 (KGLKHVVQCVFVAIRTIGN) are Cytoplasmic-facing. A helical membrane pass occupies residues 1052–1071 (IVIVTTLLQFMFACIGVQLF). Residues 1072–1121 (KGKLYTCSDSSKQTEAECKGNYITYKDGEVDHPIIQPRSWENSKFDFDNV) lie on the Extracellular side of the membrane. Cys1078 and Cys1089 are oxidised to a cystine. Residues 1109–1198 (RSWENSKFDF…FQEQGEQEYK (90 aa)) are dihydropyridine binding. The segment at residues 1122–1142 (LAAMMALFTVSTFEGWPELLY) is an intramembrane region (pore-forming). A Selectivity filter of repeat III motif is present at residues 1133–1136 (TFEG). Residue Glu1135 participates in Ca(2+) binding. Topologically, residues 1143 to 1159 (RSIDSHTEDKGPIYNYR) are extracellular. Residues 1160–1181 (VEISIFFIIYIIIIAFFMMNIF) form a helical membrane-spanning segment. At 1182–1239 (VGFVIVTFQEQGEQEYKNCELDKNQRQCVEYALKARPLRRYIPKNQHQYKVWYVVNST) the chain is on the cytoplasmic side. The stretch at 1226-1527 (NQHQYKVWYV…LFVAVIMDNF (302 aa)) is one IV repeat. The chain crosses the membrane as a helical span at residues 1240–1261 (YFEYLMFVLILLNTICLAMQHY). Residues 1262–1269 (GQSCLFKI) lie on the Extracellular side of the membrane. Residues 1270–1291 (AMNILNMLFTGLFTVEMILKLI) form a helical membrane-spanning segment. Topologically, residues 1292–1301 (AFKPKGYFSD) are cytoplasmic. A helical membrane pass occupies residues 1302–1321 (PWNVFDFLIVIGSIIDVILS). Residues 1322 to 1372 (ETNHYFCDAWNTFDALIVVGSIVDIAITEVNPAEHTQCSPSMNAEENSRIS) are Extracellular-facing. The helical transmembrane segment at 1373-1391 (ITFFRLFRVMRLVKLLSRG) threads the bilayer. Over 1392-1409 (EGIRTLLWTFIKSFQALP) the chain is Cytoplasmic. A helical transmembrane segment spans residues 1410 to 1430 (YVALLIVMLFFIYAVIGMQVF). At 1431 to 1452 (GKIALNDTTEINRNNNFQTFPQ) the chain is on the extracellular side. N-linked (GlcNAc...) asparagine glycosylation occurs at Asn1436. The segment at residues 1453–1471 (AVLLLFRCATGEAWQDIML) is an intramembrane region (pore-forming). A Selectivity filter of repeat IV motif is present at residues 1462–1465 (TGEA). Over 1472–1499 (ACMPGKKCAPESEPSNSTEGETPCGSSF) the chain is Extracellular. A dihydropyridine binding region spans residues 1478–1546 (KCAPESEPSN…LGPHHLDEFK (69 aa)). Cys1479 and Cys1495 form a disulfide bridge. N-linked (GlcNAc...) asparagine glycosylation is present at Asn1487. A phenylalkylamine binding region spans residues 1492 to 1534 (ETPCGSSFAVFYFISFYMLCAFLIINLFVAVIMDNFDYLTRDW). A helical membrane pass occupies residues 1500–1524 (AVFYFISFYMLCAFLIINLFVAVIM). The Cytoplasmic segment spans residues 1525–2221 (DNFDYLTRDW…QDSRVYVSSL (697 aa)). The segment at 1659 to 1686 (DEVTVGKFYATFLIQEYFRKFKKRKEQG) is important for interaction with STAC1, STAC2 and STAC3. The calmodulin-binding IQ region stretch occupies residues 1665–1685 (KFYATFLIQEYFRKFKKRKEQ). Positions 1699 to 1718 (LQAGLRTLHDIGPEIRRAIS) are important for localization in at the junctional membrane. Phosphoserine is present on residues Ser1718 and Ser1739. The disordered stretch occupies residues 1778–1847 (INKAGSSQGD…TVEGHGPPLS (70 aa)). Positions 1799 to 1811 (STFTPSSYSSTGS) are enriched in polar residues. The segment covering 1812–1822 (NANINNANNTA) has biased composition (low complexity). Position 1981 is a phosphoserine; by PKA (Ser1981). Disordered stretches follow at residues 2029–2063 (ASFPRPFATPPATPGSRGWPPQPVPTLRLEGVESS) and 2186–2221 (AGQDRAGGEEDAGCVRARGRPSEEELQDSRVYVSSL).

It belongs to the calcium channel alpha-1 subunit (TC 1.A.1.11) family. CACNA1C subfamily. In terms of assembly, component of a calcium channel complex consisting of a pore-forming alpha subunit (CACNA1C) and ancillary beta, gamma and delta subunits. The channel complex contains alpha, beta, gamma and delta subunits in a 1:1:1:1 ratio, i.e. it contains only one of each type of subunit. CACNA1C channel activity is modulated by ancillary subunits, such as CACNB1, CACNB2, CACNB3, CACNA2D1 and CACNA2D4. Interacts with the gamma subunits CACNG4, CACNG6, CACNG7 and CACNG8. Interacts with CACNB1. Interacts with CACNB2. Identified in a complex with CACNA2D4 and CACNB3. Interacts with CACNB3. Interacts with CACNA2D1. Interacts with CACNA2D4. Interacts with CALM1. Interacts (via the N-terminus and the C-terminal C and IQ motifs) with CABP1; this inhibits Ca(2+)-dependent channel inactivation. The binding via the C motif is calcium independent whereas the binding via IQ requires the presence of calcium and is mutually exclusive with calmodulin binding. The binding to the cytoplasmic N-terminal domain is calcium independent but is essential for the channel modulation. Interacts (via C-terminal CDB motif) with CABP5; in a calcium-dependent manner. Interacts with CIB1; the interaction increases upon cardiomyocytes hypertrophy. Interacts with STAC2 and STAC3; this inhibits channel inactivation. (Microbial infection) Interacts with influenzavirus H1 hemagglutinin. In terms of processing, phosphorylation by PKA at Ser-1981 activates the channel. Elevated levels of blood glucose lead to increased phosphorylation by PKA. Detected throughout the brain, including hippocampus, cerebellum and amygdala, throughout the heart and vascular system, including ductus arteriosus, in urinary bladder, and in retina and sclera in the eye. Expressed in brain, heart, jejunum, ovary, pancreatic beta-cells and vascular smooth muscle. Overall expression is reduced in atherosclerotic vascular smooth muscle.

It localises to the cell membrane. It is found in the sarcolemma. The protein resides in the perikaryon. Its subcellular location is the postsynaptic density membrane. The protein localises to the cell projection. It localises to the dendrite. It is found in the T-tubule. It carries out the reaction Ca(2+)(in) = Ca(2+)(out). Its activity is regulated as follows. Inhibited by dihydropyridines (DHP), such as isradipine. Inhibited by nifedipine. Channel activity is regulated by Ca(2+) and calmodulin. Binding of STAC1, STAC2 or STAC3 to a region that overlaps with the calmodulin binding site inhibits channel inactivation by Ca(2+) and calmodulin. Binding of calmodulin or CABP1 at the same regulatory sites results in opposite effects on the channel function. Shear stress and pressure increases calcium channel activity. Its function is as follows. Pore-forming, alpha-1C subunit of the voltage-gated calcium channel that gives rise to L-type calcium currents. Mediates influx of calcium ions into the cytoplasm, and thereby triggers calcium release from the sarcoplasm. Plays an important role in excitation-contraction coupling in the heart. Required for normal heart development and normal regulation of heart rhythm. Required for normal contraction of smooth muscle cells in blood vessels and in the intestine. Essential for normal blood pressure regulation via its role in the contraction of arterial smooth muscle cells. Long-lasting (L-type) calcium channels belong to the 'high-voltage activated' (HVA) group. Functionally, pore-forming, alpha-1C subunit of the voltage-gated calcium channel that gives rise to L-type calcium currents. (Microbial infection) Acts as a receptor for Influenzavirus. May play a critical role in allowing virus entry when sialylated and expressed on lung tissues. The polypeptide is Voltage-dependent L-type calcium channel subunit alpha-1C (CACNA1C) (Homo sapiens (Human)).